A 683-amino-acid chain; its full sequence is Outer dynein arm-docking complex subunit 4 (683 aa).

4 TPR repeats span residues 13–46 (FPSYMAEGERLYLCGEFAKAAHSFSNALHLQSGD), 47–80 (KNCLVARSKCFLKMGELEKSLEDAEASLQGDPTF), 48–80 (NCLVARSKCFLKMGELEKSLEDAEASLQGDPTF), and 81–114 (CKGILQKAETLYTMGDFEFALVFYHRGYKLRPDR). Positions 158–179 (QQKPHPVRQLIHHPKRESKRKG) are disordered. Basic residues predominate over residues 167–179 (LIHHPKRESKRKG). 5 TPR repeats span residues 275–311 (LKSLEDIDMLLTSGSAEGSLQKAEKVLKKVLEWNKEE), 320–353 (GNLYSCIGNAQIELGQMVAALQSHRKDLEIAKEY), 360–393 (SRALDNIGRVFARVGKFQQAIDTWEEKIPLAKTT), 397–430 (TWLFHEIGRCYLELDQAWEAQSYGEKSQQCAEEE), and 437–470 (LNASVLVAQAQVKLRDFESAVNNFEKALERAKLV). Disordered stretches follow at residues 510 to 537 (ENATMLDGQTRTAKEKETRKTKDEPEKV) and 553 to 683 (VLSK…EPIE). 4 stretches are compositionally biased toward basic and acidic residues: residues 521-537 (TAKEKETRKTKDEPEKV), 566-590 (PEQRQREDPEKASWRKELGAKERGP), 602-620 (GRTEQNREETREIYRRPSE), and 629-675 (SSPR…IEKD). A TPR 15 repeat occupies 592–625 (DTAKGQFGEAGRTEQNREETREIYRRPSELDQNL).

Component of the outer dynein arm-docking complex along with ODAD1, ODAD2 and ODAD3. Interacts with ODAD1; this interaction may facilitate the recruitment and/or attachment of outer dynein arm docking complex proteins, including ODAD1, ODAD3 and ODAD2, to ciliary axonemes. Interacts with components of the IFT complex A, including IFT140, TTC21B/IFT139 and WDR19/IFT144, and the IFT complex B, including IFT46, IFT52 and IFT57. Interacts with CFAP53. Expressed in trachea multiciliated cells.

The protein localises to the cytoplasm. The protein resides in the cytoskeleton. It is found in the cilium axoneme. Functionally, component of the outer dynein arm-docking complex (ODA-DC) that mediates outer dynein arms (ODA) binding onto the doublet microtubule. Plays an essential role for the assembly of ODA-DC and for the docking of ODA in ciliary axoneme. This is Outer dynein arm-docking complex subunit 4 from Bos taurus (Bovine).